The following is a 275-amino-acid chain: Cis-2,3-dihydrobiphenyl-2,3-diol dehydrogenase (275 aa).

Residue 9–33 (LITGGASGLGRALVDRFVAEAKVAV) participates in NAD(+) binding. S140 contributes to the substrate binding site. Y153 serves as the catalytic Proton acceptor.

This sequence belongs to the short-chain dehydrogenases/reductases (SDR) family.

It catalyses the reaction (2R,3S)-3-phenylcyclohexa-3,5-diene-1,2-diol + NAD(+) = biphenyl-2,3-diol + NADH + H(+). It participates in xenobiotic degradation; biphenyl degradation; 2-hydroxy-2,4-pentadienoate and benzoate from biphenyl: step 2/4. In Metapseudomonas furukawaii (Pseudomonas furukawaii), this protein is Cis-2,3-dihydrobiphenyl-2,3-diol dehydrogenase (bphB).